A 484-amino-acid polypeptide reads, in one-letter code: tRNA-2-methylthio-N(6)-dimethylallyladenosine synthase (484 aa).

The MTTase N-terminal domain maps to 29 to 149 (GVFHIHTLGC…LPKLLDQNRA (121 aa)). [4Fe-4S] cluster is bound by residues Cys38, Cys78, Cys112, Cys186, Cys190, and Cys193. Positions 172–401 (RASRISSWVA…VALQEQITEE (230 aa)) constitute a Radical SAM core domain. In terms of domain architecture, TRAM spans 404–474 (ATFEGRDVEV…RHNLLADPDV (71 aa)).

The protein belongs to the methylthiotransferase family. MiaB subfamily. In terms of assembly, monomer. [4Fe-4S] cluster serves as cofactor.

It localises to the cytoplasm. It catalyses the reaction N(6)-dimethylallyladenosine(37) in tRNA + (sulfur carrier)-SH + AH2 + 2 S-adenosyl-L-methionine = 2-methylsulfanyl-N(6)-dimethylallyladenosine(37) in tRNA + (sulfur carrier)-H + 5'-deoxyadenosine + L-methionine + A + S-adenosyl-L-homocysteine + 2 H(+). Catalyzes the methylthiolation of N6-(dimethylallyl)adenosine (i(6)A), leading to the formation of 2-methylthio-N6-(dimethylallyl)adenosine (ms(2)i(6)A) at position 37 in tRNAs that read codons beginning with uridine. The protein is tRNA-2-methylthio-N(6)-dimethylallyladenosine synthase of Bifidobacterium longum subsp. infantis (strain ATCC 15697 / DSM 20088 / JCM 1222 / NCTC 11817 / S12).